Consider the following 401-residue polypeptide: DNA damage checkpoint control protein RAD17 (401 aa).

The segment at 367-393 is disordered; the sequence is KKIKLPSEEENNKNRESEDEENHCKYP. Over residues 371–393 the composition is skewed to basic and acidic residues; it reads LPSEEENNKNRESEDEENHCKYP. Phosphoserine is present on Ser383.

The protein belongs to the rad1 family. In terms of assembly, component of the checkpoint clamp complex composed of DDC1, MEC3 and RAD17. The interaction with MEC3 is performed in a RAD17-dependent manner. The checkpoint clamp complex loads onto DNA. Interacts with the DNA polymerase zeta subunit REV7. 2 RAD17 subunits also form a heterotrimer with one MEC3 subunit.

Its subcellular location is the nucleus. Component of the checkpoint clamp complex involved in the surveillance mechanism that allows the DNA repair pathways to act to restore the integrity of the DNA prior to DNA synthesis or separation of the replicated chromosomes. Associates with sites of DNA damage and modulates the MEC1 signaling pathway and the activation of RAD53 in response to DNA damage at phase G1. The complex also physically regulates DNA polymerase zeta-dependent mutagenesis by controlling the access of polymerase zeta to damaged DNA. Contrary to its human counterpart, the 9-1-1 complex, the checkpoint clamp complex shows no detectable exonuclease activity. The chain is DNA damage checkpoint control protein RAD17 (RAD17) from Saccharomyces cerevisiae (strain ATCC 204508 / S288c) (Baker's yeast).